We begin with the raw amino-acid sequence, 266 residues long: Regulatory protein RecX (266 aa).

Belongs to the RecX family.

Its subcellular location is the cytoplasm. Functionally, modulates RecA activity. This chain is Regulatory protein RecX, found in Levilactobacillus brevis (strain ATCC 367 / BCRC 12310 / CIP 105137 / JCM 1170 / LMG 11437 / NCIMB 947 / NCTC 947) (Lactobacillus brevis).